Reading from the N-terminus, the 494-residue chain is NAD(P)H-quinone oxidoreductase subunit 2 B, chloroplastic (494 aa).

The next 14 membrane-spanning stretches (helical) occupy residues 13–33 (SILP…IDLI), 39–59 (TPWL…ILLF), 81–101 (IFRL…IDYI), 107–127 (ALTE…FLCC), 131–151 (LVTI…LSGY), 166–186 (LLMG…LYGL), 211–231 (MFIS…LVPF), 243–263 (PTPV…ALAT), 277–297 (WHLL…FIAV), 305–325 (MLAY…IAAE), 336–356 (YMLI…LFGL), 378–398 (LSLV…GFFG), 411–433 (LYFL…LKII), and 468–488 (MIIC…IIAI).

This sequence belongs to the complex I subunit 2 family. As to quaternary structure, NDH is composed of at least 16 different subunits, 5 of which are encoded in the nucleus.

The protein resides in the plastid. It is found in the chloroplast thylakoid membrane. It carries out the reaction a plastoquinone + NADH + (n+1) H(+)(in) = a plastoquinol + NAD(+) + n H(+)(out). The catalysed reaction is a plastoquinone + NADPH + (n+1) H(+)(in) = a plastoquinol + NADP(+) + n H(+)(out). NDH shuttles electrons from NAD(P)H:plastoquinone, via FMN and iron-sulfur (Fe-S) centers, to quinones in the photosynthetic chain and possibly in a chloroplast respiratory chain. The immediate electron acceptor for the enzyme in this species is believed to be plastoquinone. Couples the redox reaction to proton translocation, and thus conserves the redox energy in a proton gradient. The protein is NAD(P)H-quinone oxidoreductase subunit 2 B, chloroplastic of Angiopteris evecta (Mule's foot fern).